Reading from the N-terminus, the 242-residue chain is MATDGENGRHQEVGHKSLLQSDALYQYILETSVYPREPEPMKELREITAKHPWNLMTTSADEGQFLSMLIKLINAKNTMEIGVFTGYSLLATAMALPDDGKILAMDINRENYEIGLPVIEKAGLAHKIEFKEGPALPVLDQMIEDGKYHGSYDFIFVDADKDNYLNYHKRLIDLVKIGGLIGYDNTLWNGSVVAPPDAPLRKYVRYYRDFVLELNKALAADSRIEICQLPVGDGITLCRRIS.

Lysine 16 is a binding site for substrate. S-adenosyl-L-methionine-binding positions include threonine 58, glutamate 80, 82 to 83 (GV), serine 88, aspartate 106, and alanine 135. Aspartate 158 is a substrate binding site. Aspartate 158 contributes to the a divalent metal cation binding site. An S-adenosyl-L-methionine-binding site is contributed by aspartate 160. Residues aspartate 184 and asparagine 185 each contribute to the a divalent metal cation site. Asparagine 189 contacts substrate.

The protein belongs to the class I-like SAM-binding methyltransferase superfamily. Cation-dependent O-methyltransferase family. CCoAMT subfamily. Mg(2+) is required as a cofactor. Mostly expressed in the bottom and middle parts of the stems.

The enzyme catalyses (E)-caffeoyl-CoA + S-adenosyl-L-methionine = (E)-feruloyl-CoA + S-adenosyl-L-homocysteine + H(+). The protein operates within aromatic compound metabolism; phenylpropanoid biosynthesis. In terms of biological role, methylates caffeoyl-CoA to feruloyl-CoA and 5-hydroxyferuloyl-CoA to sinapoyl-CoA. Plays a role in the synthesis of feruloylated polysaccharides. Involved in the reinforcement of the plant cell wall. Also involved in the responding to wounding or pathogen challenge by the increased formation of cell wall-bound ferulic acid polymers. This is Caffeoyl-CoA O-methyltransferase 4 (CCOAOMT4) from Nicotiana tabacum (Common tobacco).